Consider the following 140-residue polypeptide: Fluoride-specific ion channel FluC 1 (140 aa).

A run of 4 helical transmembrane segments spans residues 3–23 (TGATLIELLAVALGGGTGAAA), 38–58 (APLWSLAVVNLLGTVVLGLVL), 80–100 (ILYPLLGIGLAGGFTTFSTVM), and 113–133 (IAGVVGMAVVCCAVFLPALWC). 2 residues coordinate Na(+): Gly91 and Thr94.

Belongs to the fluoride channel Fluc/FEX (TC 1.A.43) family.

The protein resides in the cell membrane. It catalyses the reaction fluoride(in) = fluoride(out). Its activity is regulated as follows. Na(+) is not transported, but it plays an essential structural role and its presence is essential for fluoride channel function. Fluoride-specific ion channel. Important for reducing fluoride concentration in the cell, thus reducing its toxicity. The chain is Fluoride-specific ion channel FluC 1 from Corynebacterium jeikeium (strain K411).